A 419-amino-acid chain; its full sequence is Alpha-galactosidase A (419 aa).

The first 31 residues, 1–31 (MKLLSRDTRLVCELALCPLALVFWSILGVRA), serve as a signal peptide directing secretion. Disulfide bonds link Cys-52–Cys-94 and Cys-56–Cys-63. Residue Asn-139 is glycosylated (N-linked (GlcNAc...) asparagine). Cys-142 and Cys-172 form a disulfide bridge. Asp-170 functions as the Nucleophile in the catalytic mechanism. At Tyr-186 the chain carries Phosphotyrosine. Residue Asn-192 is glycosylated (N-linked (GlcNAc...) asparagine). Residues Cys-202 and Cys-223 are joined by a disulfide bond. 203–207 (EWPLY) is a substrate binding site. Asn-215 is a glycosylation site (N-linked (GlcNAc...) asparagine). Residue Asp-231 is the Proton donor of the active site. Cys-378 and Cys-382 form a disulfide bridge.

Belongs to the glycosyl hydrolase 27 family. Homodimer.

The protein resides in the lysosome. It catalyses the reaction Hydrolysis of terminal, non-reducing alpha-D-galactose residues in alpha-D-galactosides, including galactose oligosaccharides, galactomannans and galactolipids.. The enzyme catalyses a globoside Gb3Cer (d18:1(4E)) + H2O = a beta-D-Gal-(1-&gt;4)-beta-D-Glc-(1&lt;-&gt;1)-Cer(d18:1(4E)) + D-galactose. The catalysed reaction is a globoside Gb3Cer + H2O = a beta-D-galactosyl-(1-&gt;4)-beta-D-glucosyl-(1&lt;-&gt;1)-ceramide + D-galactose. With respect to regulation, galactosylgalactosylglucosylceramidase activity is stimulated by saposin B and ammonium chloride. Catalyzes the hydrolysis of glycosphingolipids and participates in their degradation in the lysosome. The sequence is that of Alpha-galactosidase A from Mus musculus (Mouse).